Reading from the N-terminus, the 130-residue chain is Anti-adapter protein IraD (130 aa).

It belongs to the GpW/Gp25 family. IraD subfamily. As to quaternary structure, interacts with RssB.

It is found in the cytoplasm. Functionally, inhibits RpoS proteolysis by regulating RssB activity, thereby increasing the stability of the sigma stress factor RpoS during oxidative stress. Its effect on RpoS stability is due to its interaction with RssB, which probably blocks the interaction of RssB with RpoS, and the consequent delivery of the RssB-RpoS complex to the ClpXP protein degradation pathway. This Escherichia coli O157:H7 protein is Anti-adapter protein IraD.